Here is a 101-residue protein sequence, read N- to C-terminus: Urease subunit beta (101 aa).

The protein belongs to the urease beta subunit family. In terms of assembly, heterotrimer of UreA (gamma), UreB (beta) and UreC (alpha) subunits. Three heterotrimers associate to form the active enzyme.

The protein localises to the cytoplasm. It catalyses the reaction urea + 2 H2O + H(+) = hydrogencarbonate + 2 NH4(+). It participates in nitrogen metabolism; urea degradation; CO(2) and NH(3) from urea (urease route): step 1/1. The protein is Urease subunit beta of Burkholderia vietnamiensis (strain G4 / LMG 22486) (Burkholderia cepacia (strain R1808)).